Reading from the N-terminus, the 177-residue chain is Retrograde regulation protein 1 (177 aa).

Residues 1 to 24 (MSSIPAGTDPGSCGANFKNDRKRR) form a disordered region. Positions 11-96 (GSCGANFKND…TQAVEYISHL (86 aa)) constitute a bHLH domain. Residues Ser50 and Ser52 each carry the phosphoserine modification. Disordered regions lie at residues 52 to 82 (SNDT…KPNK) and 147 to 177 (LAAT…GNGS). A Phosphothreonine modification is found at Thr60. The segment covering 168–177 (GGYGEYGNGS) has biased composition (gly residues).

As to quaternary structure, binds DNA as a heterodimer with RTG3.

Its subcellular location is the nucleus. Functionally, required for a novel path of interorganelle communication between mitochondria, peroxisomes and the nucleus, thereby maintaining a functional metabolic interaction between the tricarboxylic acid and glyoxylate cycles. Transcription factor that regulates CIT2 gene expression. Binds to two identical sites oriented as inverted repeats 28 bp apart in a regulatory upstream activation sequence element (UASR) in the CIT2 promoter. The core binding site is 5'-GGTCAC-3'. This is Retrograde regulation protein 1 (RTG1) from Saccharomyces cerevisiae (strain ATCC 204508 / S288c) (Baker's yeast).